Consider the following 339-residue polypeptide: tRNA N6-adenosine threonylcarbamoyltransferase (339 aa).

The Fe cation site is built by His111 and His115. Substrate contacts are provided by residues 139–143 (LVSGG), Asp172, Gly185, Asp189, and Asn280. Asp308 lines the Fe cation pocket.

This sequence belongs to the KAE1 / TsaD family. The cofactor is Fe(2+).

The protein resides in the cytoplasm. It catalyses the reaction L-threonylcarbamoyladenylate + adenosine(37) in tRNA = N(6)-L-threonylcarbamoyladenosine(37) in tRNA + AMP + H(+). Its function is as follows. Required for the formation of a threonylcarbamoyl group on adenosine at position 37 (t(6)A37) in tRNAs that read codons beginning with adenine. Is involved in the transfer of the threonylcarbamoyl moiety of threonylcarbamoyl-AMP (TC-AMP) to the N6 group of A37, together with TsaE and TsaB. TsaD likely plays a direct catalytic role in this reaction. The polypeptide is tRNA N6-adenosine threonylcarbamoyltransferase (Bacteroides thetaiotaomicron (strain ATCC 29148 / DSM 2079 / JCM 5827 / CCUG 10774 / NCTC 10582 / VPI-5482 / E50)).